The following is a 703-amino-acid chain: MLHLKVQFLDDSQKIFVVDQKSSGKALFNLSCGHLNLAEKEYFGLEFCSHSGNNVWLELLKPITKQVKNPKEVVFKFMVKFFPVDPGHLREELTRYLFTLQIKKDLALGRLPCSDNCTALMVSHILQSELGDFHEETVRKHLVQTQYLPSQASLESKIMQFHQQHIGRSPAESDILLLDIARKLDMYGIRPQPASDGEGMQIHLAVAHMGVLVLRGNTKINTFNWAKIRKLSFKRKHFLIKLHANILVLCKDTLEFTMASRDACKAFWKTCVEYHAFFRLSEEPKSKPKTLLCSKGSSFRYSGRTQRQLLEYGKKGRLKSLPFERKQYPSQYHERQCRSSPDILSDVSKQVEDLRLTYGSSYYRNVNGVHASESMLDSRRRNSAVEVTFAAELEHSKPEAEATSLHPSQSSSSFTFIYADPVFNTDPEPIEFFEERSPLSSFQTTSKFADSHTSKASPARQLTYTDVPYIPCTSQKVDIMPPQVFFYVDKPPQVPRRSLIMAEENMRPDSYVDHSAIKPAKRSPRNMRIKSLQQDLQELQEAMARTSGRSNINVEPEEEDPHLDDAFAYNLQEQTPKRSQSQSDMKTIRFPFGSEFRPLGPCPALTRKTDLFACTFAEQEFPTVLIDQSSAERYVASESSDSESEIIKPDYYFLYGKGTKSPRARIRLSSGSLQLEEEDETISFATPGAEDRTLLKPCNYFLA.

One can recognise an FERM domain in the interval 2–282; it reads LHLKVQFLDD…EYHAFFRLSE (281 aa). Residues 525 to 552 adopt a coiled-coil conformation; the sequence is RNMRIKSLQQDLQELQEAMARTSGRSNI.

As to expression, in the developing cerebral cortex, strong expression is observed in the ventricular and intermediate zones at 13 and 17 dpc. At 17 dpc and P0, expression appears to be restricted to the cortical plate. In neonates, highly expressed in cortex, hippocampus, cerebellum, olfactory bulb and eye with little or no expression in liver, kidney, skeletal muscle or heart muscle (at protein level).

It localises to the cell projection. The protein localises to the neuron projection. It is found in the growth cone. In terms of biological role, plays a role in neurite development, may be through the activation of the GTPase RAC1. Plays a role in the control of eye movement and gaze stability. This is FERM domain-containing protein 7 from Mus musculus (Mouse).